A 477-amino-acid polypeptide reads, in one-letter code: 3-isopropylmalate dehydratase large subunit (477 aa).

[4Fe-4S] cluster-binding residues include Cys-347, Cys-407, and Cys-410. The tract at residues 418–442 (LAPGERSASTSNRNFEGRQGKGGRT) is disordered.

The protein belongs to the aconitase/IPM isomerase family. LeuC type 1 subfamily. In terms of assembly, heterodimer of LeuC and LeuD. Requires [4Fe-4S] cluster as cofactor.

The catalysed reaction is (2R,3S)-3-isopropylmalate = (2S)-2-isopropylmalate. Its pathway is amino-acid biosynthesis; L-leucine biosynthesis; L-leucine from 3-methyl-2-oxobutanoate: step 2/4. In terms of biological role, catalyzes the isomerization between 2-isopropylmalate and 3-isopropylmalate, via the formation of 2-isopropylmaleate. The protein is 3-isopropylmalate dehydratase large subunit of Streptomyces avermitilis (strain ATCC 31267 / DSM 46492 / JCM 5070 / NBRC 14893 / NCIMB 12804 / NRRL 8165 / MA-4680).